We begin with the raw amino-acid sequence, 1705 residues long: Protein TIC 214 (1705 aa).

Transmembrane regions (helical) follow at residues 18–38, 67–87, 127–147, 175–195, and 218–238; these read IINSVVVVGLYYGFLTTFSIG, FITGQLIMFISIYYAPLHLAL, LSIQCVFLNNLIFQLLNHFIL, VGWIIGHILFMKWVGLLLVWI, and SMSMAGIFSIFLLVTCVHYLG.

It belongs to the TIC214 family. In terms of assembly, part of the Tic complex.

It is found in the plastid. Its subcellular location is the chloroplast inner membrane. In terms of biological role, involved in protein precursor import into chloroplasts. May be part of an intermediate translocation complex acting as a protein-conducting channel at the inner envelope. This Helianthus annuus (Common sunflower) protein is Protein TIC 214.